A 289-amino-acid polypeptide reads, in one-letter code: tRNA dimethylallyltransferase (289 aa).

Position 9–16 (9–16 (GTTASGKT)) interacts with ATP. 11 to 16 (TASGKT) is a binding site for substrate. The interaction with substrate tRNA stretch occupies residues 34-37 (DSLC).

This sequence belongs to the IPP transferase family. As to quaternary structure, monomer. Requires Mg(2+) as cofactor.

The catalysed reaction is adenosine(37) in tRNA + dimethylallyl diphosphate = N(6)-dimethylallyladenosine(37) in tRNA + diphosphate. In terms of biological role, catalyzes the transfer of a dimethylallyl group onto the adenine at position 37 in tRNAs that read codons beginning with uridine, leading to the formation of N6-(dimethylallyl)adenosine (i(6)A). This Campylobacter jejuni (strain RM1221) protein is tRNA dimethylallyltransferase.